A 678-amino-acid polypeptide reads, in one-letter code: Probable E3 ubiquitin ligase complex SCF subunit sconB (678 aa).

The segment at 1–52 (MSTEDNHDSQILTARHRSDASEQSFKSLFGGPSSEDGKETEPDTHDHNHSFS) is disordered. The segment covering 35–49 (EDGKETEPDTHDHNH) has biased composition (basic and acidic residues). The F-box domain occupies 178–224 (IDFITALPPEIAFKILCYLDTTSLCKASQVSRGWRALADDDVVWHRM). The interval 266 to 287 (VVGPRSPDASAESPPSGKRKLE) is disordered. 8 WD repeats span residues 347-375 (GHTN…KIWD), 387-415 (GHES…KVWN), 427-455 (GHRG…KIWN), 466-496 (GHTD…RLWD), 508-543 (GHVG…TSGD), 553-595 (MGLE…RLWE), 607-635 (GHLE…KIWD), and 647-675 (GHSG…RMYS).

Belongs to the WD repeat MET30/SCONB/SCON-2 family. As to quaternary structure, component of the SCF(sconB) E3 ubiquitin ligase complex.

It functions in the pathway protein modification; protein ubiquitination. Its function is as follows. Component of the SCF(sconB) E3 ubiquitin ligase complex involved in the regulation of sulfur metabolite repression, probably by mediating the inactivation or degradation of the metR transcription factor. This Emericella nidulans (strain FGSC A4 / ATCC 38163 / CBS 112.46 / NRRL 194 / M139) (Aspergillus nidulans) protein is Probable E3 ubiquitin ligase complex SCF subunit sconB (sconB).